We begin with the raw amino-acid sequence, 678 residues long: Penicillin-binding protein activator LpoA (678 aa).

A signal peptide spans 1 to 26 (MVPSTFSRLKAARCLPVVLAALIFAG). The N-palmitoyl cysteine moiety is linked to residue C27. C27 is lipidated: S-diacylglycerol cysteine. Disordered regions lie at residues 302 to 340 (DVAE…PVSA) and 496 to 528 (ALTG…DDQF). 2 stretches are compositionally biased toward low complexity: residues 330–340 (QPAAQPVPVSA) and 513–528 (TTNN…DDQF).

This sequence belongs to the LpoA family. In terms of assembly, interacts with PBP1a.

Its subcellular location is the cell outer membrane. Its function is as follows. Regulator of peptidoglycan synthesis that is essential for the function of penicillin-binding protein 1A (PBP1a). This chain is Penicillin-binding protein activator LpoA, found in Shigella sonnei (strain Ss046).